Reading from the N-terminus, the 249-residue chain is NADH dehydrogenase [ubiquinone] flavoprotein 2, mitochondrial (249 aa).

A mitochondrion-targeting transit peptide spans 1 to 32; sequence MFLSAALRARAAGLAAHWGKHIRNLHKTAVQN. K61 is modified (N6-acetyllysine). C135, C140, C176, and C180 together coordinate [2Fe-2S] cluster. At Y193 the chain carries Phosphotyrosine; by SRC. A disordered region spans residues 213-249; the sequence is IPKPGPRSGRFSCEPAGGLTSLTEPPKGPGFGVQAGL.

The protein belongs to the complex I 24 kDa subunit family. Core subunit of respiratory chain NADH dehydrogenase (Complex I) which is composed of 45 different subunits. This is a component of the flavoprotein-sulfur (FP) fragment of the enzyme. Requires [2Fe-2S] cluster as cofactor.

Its subcellular location is the mitochondrion inner membrane. It carries out the reaction a ubiquinone + NADH + 5 H(+)(in) = a ubiquinol + NAD(+) + 4 H(+)(out). In terms of biological role, core subunit of the mitochondrial membrane respiratory chain NADH dehydrogenase (Complex I) which catalyzes electron transfer from NADH through the respiratory chain, using ubiquinone as an electron acceptor. Parts of the peripheral arm of the enzyme, where the electrons from NADH are accepted by flavin mononucleotide (FMN) and then passed along a chain of iron-sulfur clusters by electron tunnelling to the final acceptor ubiquinone. Contains one iron-sulfur cluster. The sequence is that of NADH dehydrogenase [ubiquinone] flavoprotein 2, mitochondrial (NDUFV2) from Bos taurus (Bovine).